The primary structure comprises 431 residues: MTLIASLSLPPPAIQRQSLSEFHNLPAKSQSFNCQFRSSSSPLSSLHSSSLSNFLDFRLRRRNSGLVPVVACSTTPFMGRVGLHWRDGNMSLLSFCGGTDVTEKADSSQFWSALLPFVVALTAVAALSYPPSFTWVSKDLYAPALGGIMLSIGIQLSVDDFALAFKRPVPLSVGFVAQYVLKPLLGVLVANAFGMPRTFYAGFILTCCVAGAQLSSYASSLSKADVAMSILLTSSTTIASVIFTPLLSGLLIGSVVPVDAVAMSKSILQVVLVPITLGLVLNTYAKPVVTLLQPVMPFVAMVCTSLCIGSPLSINRSQILSAEGLGLIVPIVTFHAVAFALGYWFSKIPGLRQEEEVSRTISLCTGMQSSTLAGLLASQFLGSSQAVPAACSVVVMAIMGLCLASFWGNGFRIRDVLSLSTPQSTGYTAES.

The N-terminal 70 residues, 1-70, are a transit peptide targeting the chloroplast; the sequence is MTLIASLSLP…RRNSGLVPVV (70 aa). A run of 9 helical transmembrane segments spans residues 110-130, 145-165, 169-189, 198-218, 238-258, 261-281, 288-308, 325-345, and 387-407; these read FWSA…LSYP, LGGI…ALAF, VPLS…GVLV, TFYA…SSYA, IASV…VVPV, VAMS…GLVL, VVTL…SLCI, LGLI…GYWF, and VPAA…ASFW.

It belongs to the bile acid:sodium symporter (BASS) (TC 2.A.28) family.

The protein resides in the membrane. It is found in the plastid. The protein localises to the chloroplast envelope. In terms of biological role, may function as sodium-coupled metabolite transporter across the chloroplast envelope. The sequence is that of Probable sodium/metabolite cotransporter BASS3, chloroplastic (BASS3) from Arabidopsis thaliana (Mouse-ear cress).